Reading from the N-terminus, the 1050-residue chain is uncharacterized protein (1050 aa).

The Cytoplasmic segment spans residues 1-83 (MARLLTKSSQ…AVKLGTFEGC (83 aa)). A phosphoserine mark is found at S9 and S60. Position 64 is a phosphothreonine (T64). Residues 84–104 (FIPTTLNVLSILLYLRFPWII) traverse the membrane as a helical segment. At 105-112 (GEAGVLKT) the chain is on the extracellular side. Residues 113 to 133 (LLMLFISYAVGIFTSLSISAI) form a helical membrane-spanning segment. The Cytoplasmic portion of the chain corresponds to 134 to 146 (CTNGMVRGGGAYY). The chain crosses the membrane as a helical span at residues 147 to 169 (AVSRSIGPELGGSIGLIFYVGQI). Residues 170-202 (LNTGMNISGFVEPIISIFGKESGTISQFLPEGY) are Extracellular-facing. N175 carries an N-linked (GlcNAc...) asparagine glycan. A helical transmembrane segment spans residues 203-223 (WWVFLYTTCVLAMCCILCCLG). At 224–232 (SAIFAKASN) the chain is on the cytoplasmic side. Residues 233–253 (ALFVVIILSTISIPISSIFVH) form a helical membrane-spanning segment. At 254 to 295 (PFKDPSLLVHFTGLKWSTLMKNLASAYTENEKGTGYESFKST) the chain is on the extracellular side. S270 carries the post-translational modification Phosphoserine. Phosphothreonine is present on T271. Residues 296–316 (FGVFFPATAGLLAGASMSGDL) form a helical membrane-spanning segment. At 317 to 334 (KAPSRSIPKGTISSQATT) the chain is on the cytoplasmic side. Residues 335-355 (FLLYLLVILCVGASVTRTGLL) traverse the membrane as a helical segment. Residues 356–368 (LDMDVMEHISLHP) lie on the Extracellular side of the membrane. The chain crosses the membrane as a helical span at residues 369-389 (LFIISGILSSGAFSSFMGIFG). The Cytoplasmic segment spans residues 390-417 (AAKLLQAIARDDLIPGMFFFAKGSSYDD). The chain crosses the membrane as a helical span at residues 418 to 438 (IPYVAIGVTYLITQISLFWDI). Residues 439-442 (NMLS) lie on the Extracellular side of the membrane. A helical membrane pass occupies residues 443 to 463 (SMITMTFLLTFGFINLSCFLL). The Cytoplasmic segment spans residues 464-480 (RISSTPNFRPTFRYFNR). Residues 481 to 497 (RTTLVGTILSFGVMFYV) traverse the membrane as a helical segment. The Extracellular segment spans residues 498–499 (DR). A helical membrane pass occupies residues 500–520 (LNAFISFLIAGILVVVIYFTC). At 521–1050 (PPKNWGDVSQ…SKSLTITTAL (530 aa)) the chain is on the cytoplasmic side. Position 901 is a phosphoserine (S901). The interval 915 to 943 (ETESSFGNRSLSPKQENRRTYSDSTIESS) is disordered. The segment covering 916 to 928 (TESSFGNRSLSPK) has biased composition (polar residues). At S936 the chain carries Phosphoserine. T939 bears the Phosphothreonine mark.

This sequence belongs to the SLC12A transporter family.

The protein localises to the membrane. This is an uncharacterized protein from Schizosaccharomyces pombe (strain 972 / ATCC 24843) (Fission yeast).